The sequence spans 209 residues: Methylthioribulose-1-phosphate dehydratase (209 aa).

Positions 99 and 101 each coordinate Zn(2+).

It belongs to the aldolase class II family. MtnB subfamily. It depends on Zn(2+) as a cofactor.

It catalyses the reaction 5-(methylsulfanyl)-D-ribulose 1-phosphate = 5-methylsulfanyl-2,3-dioxopentyl phosphate + H2O. It functions in the pathway amino-acid biosynthesis; L-methionine biosynthesis via salvage pathway; L-methionine from S-methyl-5-thio-alpha-D-ribose 1-phosphate: step 2/6. In terms of biological role, catalyzes the dehydration of methylthioribulose-1-phosphate (MTRu-1-P) into 2,3-diketo-5-methylthiopentyl-1-phosphate (DK-MTP-1-P). This Leptospira biflexa serovar Patoc (strain Patoc 1 / Ames) protein is Methylthioribulose-1-phosphate dehydratase.